The sequence spans 207 residues: Vexin (207 aa).

Residues 56–100 are disordered; the sequence is ELLPHRGDRRDPGDRRRFGRLQTARPPTAHPAKASARPVGISEPK. Over residues 58–71 the composition is skewed to basic and acidic residues; sequence LPHRGDRRDPGDRR.

The protein belongs to the vexin family.

It localises to the cell membrane. It is found in the nucleus. Functionally, required for neurogenesis in the neural plate and retina. Strongly cooperates with neural bHLH factors to promote neurogenesis. This is Vexin from Homo sapiens (Human).